Reading from the N-terminus, the 266-residue chain is Hydroxyacylglutathione hydrolase (266 aa).

7 residues coordinate Zn(2+): His53, His55, Asp57, His58, His118, Asp140, and His178.

This sequence belongs to the metallo-beta-lactamase superfamily. Glyoxalase II family. In terms of assembly, monomer. Requires Zn(2+) as cofactor.

It catalyses the reaction an S-(2-hydroxyacyl)glutathione + H2O = a 2-hydroxy carboxylate + glutathione + H(+). The protein operates within secondary metabolite metabolism; methylglyoxal degradation; (R)-lactate from methylglyoxal: step 2/2. Its function is as follows. Thiolesterase that catalyzes the hydrolysis of S-D-lactoyl-glutathione to form glutathione and D-lactic acid. The polypeptide is Hydroxyacylglutathione hydrolase (Cupriavidus taiwanensis (strain DSM 17343 / BCRC 17206 / CCUG 44338 / CIP 107171 / LMG 19424 / R1) (Ralstonia taiwanensis (strain LMG 19424))).